The chain runs to 577 residues: Arginine--tRNA ligase (577 aa).

The 'HIGH' region motif lies at 122–132; it reads PNVAKEMHVGH.

The protein belongs to the class-I aminoacyl-tRNA synthetase family. As to quaternary structure, monomer.

The protein resides in the cytoplasm. It catalyses the reaction tRNA(Arg) + L-arginine + ATP = L-arginyl-tRNA(Arg) + AMP + diphosphate. This chain is Arginine--tRNA ligase, found in Escherichia coli O1:K1 / APEC.